Consider the following 303-residue polypeptide: Sulfotransferase 6B1 (303 aa).

65 to 70 (KCGSNW) serves as a coordination point for 3'-phosphoadenylyl sulfate. His-118 acts as the Proton acceptor in catalysis. Residues Arg-140, Ser-148, Tyr-203, 237–242 (STFQAM), and 259–261 (RKG) contribute to the 3'-phosphoadenylyl sulfate site.

Belongs to the sulfotransferase 1 family. As to expression, specifically expressed in kidney and testis.

The protein localises to the cytoplasm. Its subcellular location is the cytosol. It catalyses the reaction thyroxine + 3'-phosphoadenylyl sulfate = thyroxine sulfate + adenosine 3',5'-bisphosphate + H(+). Sulfotransferase that utilizes 3'-phospho-5'-adenylyl sulfate (PAPS) as sulfonate donor to catalyze the sulfate conjugation of thyroxine. Involved in the metabolism of thyroxine. This Homo sapiens (Human) protein is Sulfotransferase 6B1 (SULT6B1).